Consider the following 464-residue polypeptide: tRNA(Ile2) 2-agmatinylcytidine synthetase TiaS (464 aa).

It belongs to the TiaS family.

It localises to the cytoplasm. It catalyses the reaction cytidine(34) in tRNA(Ile2) + agmatine + ATP + H2O = 2-agmatinylcytidine(34) in tRNA(Ile2) + AMP + 2 phosphate + 2 H(+). ATP-dependent agmatine transferase that catalyzes the formation of 2-agmatinylcytidine (agm2C) at the wobble position (C34) of tRNA(Ile2), converting the codon specificity from AUG to AUA. This is tRNA(Ile2) 2-agmatinylcytidine synthetase TiaS from Ignisphaera aggregans (strain DSM 17230 / JCM 13409 / AQ1.S1).